The sequence spans 824 residues: Vesicle-fusing ATPase (824 aa).

Residues 582–587 (RGMIVW) and 622–629 (AKTGKTSL) each bind ATP. T627 serves as a coordination point for Mg(2+).

This sequence belongs to the AAA ATPase family. Homohexamer. It depends on Mg(2+) as a cofactor.

The protein localises to the cytoplasm. It carries out the reaction ATP + H2O = ADP + phosphate + H(+). In terms of biological role, required for vesicle-mediated transport. Catalyzes the fusion of transport vesicles within the Golgi cisternae. Is also required for transport from the endoplasmic reticulum to the Golgi stack. Seems to function as a fusion protein required for the delivery of cargo proteins to all compartments of the Golgi stack independent of vesicle origin. In Caenorhabditis elegans, this protein is Vesicle-fusing ATPase (nsf-1).